The sequence spans 248 residues: Granzyme F (248 aa).

The signal sequence occupies residues 1–18; the sequence is MPPILILLTLLLPLRAGA. A propeptide spanning residues 19 to 20 is cleaved from the precursor; that stretch reads EE. The 226-residue stretch at 21–246 folds into the Peptidase S1 domain; sequence IIGGHEVKPH…YLPWISRNMK (226 aa). A disulfide bridge links cysteine 50 with cysteine 66. Catalysis depends on histidine 65, which acts as the Charge relay system. A glycan (N-linked (GlcNAc...) asparagine) is linked at asparagine 106. The active-site Charge relay system is the aspartate 109. 2 disulfide bridges follow: cysteine 143–cysteine 210 and cysteine 175–cysteine 189. Residue asparagine 154 is glycosylated (N-linked (GlcNAc...) asparagine). Serine 204 functions as the Charge relay system in the catalytic mechanism. Asparagine 223 is a glycosylation site (N-linked (GlcNAc...) asparagine).

The protein belongs to the peptidase S1 family. Granzyme subfamily.

It localises to the cytolytic granule. This enzyme is probably necessary for target cell lysis in cell-mediated immune responses. The chain is Granzyme F (Gzmf) from Mus musculus (Mouse).